Here is a 151-residue protein sequence, read N- to C-terminus: Large ribosomal subunit protein uL13 (151 aa).

This sequence belongs to the universal ribosomal protein uL13 family. In terms of assembly, part of the 50S ribosomal subunit.

Its function is as follows. This protein is one of the early assembly proteins of the 50S ribosomal subunit, although it is not seen to bind rRNA by itself. It is important during the early stages of 50S assembly. This Microcystis aeruginosa (strain NIES-843 / IAM M-2473) protein is Large ribosomal subunit protein uL13.